A 334-amino-acid chain; its full sequence is N-acetyl-gamma-glutamyl-phosphate reductase (334 aa).

Residue C154 is part of the active site.

Belongs to the NAGSA dehydrogenase family. Type 1 subfamily.

It localises to the cytoplasm. It catalyses the reaction N-acetyl-L-glutamate 5-semialdehyde + phosphate + NADP(+) = N-acetyl-L-glutamyl 5-phosphate + NADPH + H(+). It participates in amino-acid biosynthesis; L-arginine biosynthesis; N(2)-acetyl-L-ornithine from L-glutamate: step 3/4. In terms of biological role, catalyzes the NADPH-dependent reduction of N-acetyl-5-glutamyl phosphate to yield N-acetyl-L-glutamate 5-semialdehyde. The polypeptide is N-acetyl-gamma-glutamyl-phosphate reductase (Buchnera aphidicola subsp. Acyrthosiphon pisum (strain 5A)).